The primary structure comprises 433 residues: Serine hydroxymethyltransferase (433 aa).

(6S)-5,6,7,8-tetrahydrofolate-binding positions include Leu132 and 136-138 (GHL). The residue at position 241 (Lys241) is an N6-(pyridoxal phosphate)lysine.

Belongs to the SHMT family. In terms of assembly, homodimer. Pyridoxal 5'-phosphate is required as a cofactor.

The protein localises to the cytoplasm. The enzyme catalyses (6R)-5,10-methylene-5,6,7,8-tetrahydrofolate + glycine + H2O = (6S)-5,6,7,8-tetrahydrofolate + L-serine. The protein operates within one-carbon metabolism; tetrahydrofolate interconversion. Its pathway is amino-acid biosynthesis; glycine biosynthesis; glycine from L-serine: step 1/1. Functionally, catalyzes the reversible interconversion of serine and glycine with tetrahydrofolate (THF) serving as the one-carbon carrier. This reaction serves as the major source of one-carbon groups required for the biosynthesis of purines, thymidylate, methionine, and other important biomolecules. Also exhibits THF-independent aldolase activity toward beta-hydroxyamino acids, producing glycine and aldehydes, via a retro-aldol mechanism. The protein is Serine hydroxymethyltransferase of Bradyrhizobium sp. (strain ORS 278).